The primary structure comprises 415 residues: Sensor protein kinase WalK (415 aa).

The 53-residue stretch at 11-63 folds into the HAMP domain; that stretch reads RTITKPITDMRNQTVEMSRGNYTQRVKIYGNDEIGELALAFNNLSKRVQEAQA. The PAS domain occupies 68 to 138; that stretch reads EKRRLDSVIT…EIQENNDSFL (71 aa). Zn(2+) is bound by residues His-78, Asp-81, His-171, and Glu-175. The 65-residue stretch at 121–185 folds into the PAC domain; it reads LEDEFKLEEI…QQQVERERRE (65 aa). Residues 189–407 enclose the Histidine kinase domain; the sequence is NVSHELRTPL…SIFITLPCEV (219 aa). His-192 is modified (phosphohistidine; by autocatalysis).

As to quaternary structure, forms homodimers. Forms homooligomers. Requires NH4(+) as cofactor. In terms of processing, autophosphorylated.

Its subcellular location is the cell membrane. The catalysed reaction is ATP + protein L-histidine = ADP + protein N-phospho-L-histidine.. Its activity is regulated as follows. By zinc. Zinc-binding negatively regulates WalK kinase activity and thus autophosphorylation. Member of the two-component regulatory system WalK/WalR that regulates genes involved in cell wall metabolism, virulence regulation, biofilm production, oxidative stress resistance and antibiotic resistance via direct or indirect regulation of autolysins. Functions as a sensor protein kinase which is autophosphorylated at a histidine residue in the dimerization domain and transfers its phosphate group to the conserved aspartic acid residue in the regulatory domain of WalR. In turn, WalR binds to the upstream promoter regions of the target genes to positively and negatively regulate their expression. In Staphylococcus aureus, this protein is Sensor protein kinase WalK (walK).